The primary structure comprises 271 residues: Shikimate dehydrogenase (NADP(+)) (271 aa).

Residues 14–16 (SQS) and threonine 61 each bind shikimate. The active-site Proton acceptor is the lysine 65. 2 residues coordinate shikimate: asparagine 86 and aspartate 101. NADP(+)-binding positions include 125 to 129 (GAGGA), 148 to 153 (NRTHAR), and methionine 212. Tyrosine 214 contacts shikimate. Position 236 (glycine 236) interacts with NADP(+).

This sequence belongs to the shikimate dehydrogenase family. Homodimer.

It catalyses the reaction shikimate + NADP(+) = 3-dehydroshikimate + NADPH + H(+). It functions in the pathway metabolic intermediate biosynthesis; chorismate biosynthesis; chorismate from D-erythrose 4-phosphate and phosphoenolpyruvate: step 4/7. Functionally, involved in the biosynthesis of the chorismate, which leads to the biosynthesis of aromatic amino acids. Catalyzes the reversible NADPH linked reduction of 3-dehydroshikimate (DHSA) to yield shikimate (SA). The polypeptide is Shikimate dehydrogenase (NADP(+)) (Edwardsiella ictaluri (strain 93-146)).